The sequence spans 436 residues: Phosphoribosylamine--glycine ligase (436 aa).

The ATP-grasp domain occupies 106–318; it reads RKLFEDYDIE…LADVCQAIVD (213 aa). 133-196 contacts ATP; it reads LDDFDRDVVV…EERLIGEEFT (64 aa). Residues Q276, E288, and N290 each coordinate Mg(2+). Positions 276, 288, and 290 each coordinate Mn(2+).

It belongs to the GARS family. The cofactor is Mg(2+). Mn(2+) is required as a cofactor.

The catalysed reaction is 5-phospho-beta-D-ribosylamine + glycine + ATP = N(1)-(5-phospho-beta-D-ribosyl)glycinamide + ADP + phosphate + H(+). It functions in the pathway purine metabolism; IMP biosynthesis via de novo pathway; N(1)-(5-phospho-D-ribosyl)glycinamide from 5-phospho-alpha-D-ribose 1-diphosphate: step 2/2. This Methanobrevibacter smithii (strain ATCC 35061 / DSM 861 / OCM 144 / PS) protein is Phosphoribosylamine--glycine ligase.